A 701-amino-acid chain; its full sequence is DNA ligase (701 aa).

NAD(+) is bound by residues 43–47 (DADYD), 92–93 (SL), and glutamate 126. The active-site N6-AMP-lysine intermediate is the lysine 128. NAD(+) is bound by residues arginine 149, glutamate 186, lysine 302, and lysine 326. The Zn(2+) site is built by cysteine 417, cysteine 420, cysteine 440, and cysteine 446. Positions 622-701 (ETGSPVTGKT…DEWLALIGET (80 aa)) constitute a BRCT domain.

Belongs to the NAD-dependent DNA ligase family. LigA subfamily. Mg(2+) is required as a cofactor. Mn(2+) serves as cofactor.

It catalyses the reaction NAD(+) + (deoxyribonucleotide)n-3'-hydroxyl + 5'-phospho-(deoxyribonucleotide)m = (deoxyribonucleotide)n+m + AMP + beta-nicotinamide D-nucleotide.. In terms of biological role, DNA ligase that catalyzes the formation of phosphodiester linkages between 5'-phosphoryl and 3'-hydroxyl groups in double-stranded DNA using NAD as a coenzyme and as the energy source for the reaction. It is essential for DNA replication and repair of damaged DNA. The chain is DNA ligase from Hyphomonas neptunium (strain ATCC 15444).